A 317-amino-acid chain; its full sequence is uncharacterized protein (317 aa).

Residues 29–86 form the HTH lysR-type domain; sequence IDLNLLTIFEAVYVHKGIVNAAKVLNLTPSAISQSIQKLRVIFPDPLFIRKGQGVTPT. A DNA-binding region (H-T-H motif) is located at residues 46 to 65; that stretch reads IVNAAKVLNLTPSAISQSIQ.

Belongs to the LysR transcriptional regulatory family.

This is an uncharacterized protein from Escherichia coli (strain K12).